Consider the following 111-residue polypeptide: Universal stress protein B (111 aa).

2 helical membrane-spanning segments follow: residues 1-21 and 90-110; these read MIST…NMAR and FLLT…LMIW.

It belongs to the universal stress protein B family.

The protein resides in the cell inner membrane. The protein is Universal stress protein B of Salmonella arizonae (strain ATCC BAA-731 / CDC346-86 / RSK2980).